A 295-amino-acid polypeptide reads, in one-letter code: uncharacterized protein (295 aa).

This sequence belongs to the ROK (NagC/XylR) family.

This is an uncharacterized protein from Clostridium perfringens (strain 13 / Type A).